A 119-amino-acid chain; its full sequence is UPF0212 protein Mlab_0931 (119 aa).

It belongs to the UPF0212 family.

This is UPF0212 protein Mlab_0931 from Methanocorpusculum labreanum (strain ATCC 43576 / DSM 4855 / Z).